Consider the following 141-residue polypeptide: ATP synthase epsilon chain 1 (141 aa).

This sequence belongs to the ATPase epsilon chain family. F-type ATPases have 2 components, CF(1) - the catalytic core - and CF(0) - the membrane proton channel. CF(1) has five subunits: alpha(3), beta(3), gamma(1), delta(1), epsilon(1). CF(0) has three main subunits: a, b and c.

It is found in the cell inner membrane. Produces ATP from ADP in the presence of a proton gradient across the membrane. This Thiobacillus denitrificans (strain ATCC 25259 / T1) protein is ATP synthase epsilon chain 1.